The chain runs to 314 residues: Ribosomal RNA small subunit methyltransferase H (314 aa).

S-adenosyl-L-methionine-binding positions include 37–39, Asp-57, Phe-84, Asp-105, and Gln-112; that span reads GSH.

Belongs to the methyltransferase superfamily. RsmH family.

It localises to the cytoplasm. The enzyme catalyses cytidine(1402) in 16S rRNA + S-adenosyl-L-methionine = N(4)-methylcytidine(1402) in 16S rRNA + S-adenosyl-L-homocysteine + H(+). Functionally, specifically methylates the N4 position of cytidine in position 1402 (C1402) of 16S rRNA. This chain is Ribosomal RNA small subunit methyltransferase H, found in Fusobacterium nucleatum subsp. nucleatum (strain ATCC 25586 / DSM 15643 / BCRC 10681 / CIP 101130 / JCM 8532 / KCTC 2640 / LMG 13131 / VPI 4355).